We begin with the raw amino-acid sequence, 117 residues long: Replication initiation control protein YabA (117 aa).

The disordered stretch occupies residues 45–81 (NQHLRERLDQSDRDKSSETENDSAQKPGHSDIGEGHD). 2 stretches are compositionally biased toward basic and acidic residues: residues 46–62 (QHLR…KSSE) and 72–81 (GHSDIGEGHD). 4 residues coordinate Zn(2+): His-92, Cys-94, Cys-107, and Cys-110.

Belongs to the YabA family. As to quaternary structure, homotetramer. Interacts with both DnaA and DnaN, acting as a bridge between these two proteins. It depends on Zn(2+) as a cofactor.

The protein localises to the cytoplasm. Its subcellular location is the nucleoid. Functionally, involved in control of chromosome replication initiation. Inhibits the cooperative binding of DnaA to the oriC region, thus negatively regulating initiation of chromosome replication. Inhibits the ability of DnaA-ATP to form a helix on DNA; does not disassemble preformed DnaA-DNA helices. Decreases the residence time of DnaA on the chromosome at its binding sites (oriC, replication forks and promoter-binding sites). Tethers DnaA to the replication machinery via the DNA polymerase beta sliding clamp subunit (dnaN). Associates with oriC and other DnaA targets on the chromosome in a DnaA-dependent manner. The polypeptide is Replication initiation control protein YabA (Bacillus pumilus (strain SAFR-032)).